The sequence spans 329 residues: MKPKRFALTPGEPAGIGPDLCLLLATQPQPYPLIAITSRDLLTQRAAQLGVAVSLLDVTPETLPDQPAPAGSLYVWHTPLAAPVETGVLNKANAAFVLQTLTRAGQGCLDGLFSGMITAPVHKGVINDGGIAFSGHTEFLAELTHTEQVVMMLATGDLRVALVTTHLPLREVADAITADRLERVTRILHADLVNKFGIAHPRILVCGLNPHAGESGHLGREEIDIIEPTLERLRSEGLDLRGPLPADTLFTPKYLEHCDAVLAMYHDQGLPVLKYKGFGAAVNVTLGLPIIRTSVDHGTALDLAGSANIDTGSLRVALQTAYQMAETHS.

Residues histidine 136 and threonine 137 each contribute to the substrate site. A divalent metal cation is bound by residues histidine 166, histidine 211, and histidine 266. Positions 274, 283, and 292 each coordinate substrate.

The protein belongs to the PdxA family. Homodimer. Zn(2+) is required as a cofactor. It depends on Mg(2+) as a cofactor. Co(2+) serves as cofactor.

The protein localises to the cytoplasm. The enzyme catalyses 4-(phosphooxy)-L-threonine + NAD(+) = 3-amino-2-oxopropyl phosphate + CO2 + NADH. It functions in the pathway cofactor biosynthesis; pyridoxine 5'-phosphate biosynthesis; pyridoxine 5'-phosphate from D-erythrose 4-phosphate: step 4/5. Catalyzes the NAD(P)-dependent oxidation of 4-(phosphooxy)-L-threonine (HTP) into 2-amino-3-oxo-4-(phosphooxy)butyric acid which spontaneously decarboxylates to form 3-amino-2-oxopropyl phosphate (AHAP). The sequence is that of 4-hydroxythreonine-4-phosphate dehydrogenase from Pseudomonas syringae pv. tomato (strain ATCC BAA-871 / DC3000).